The sequence spans 309 residues: Olfactory receptor 10V1 (309 aa).

Residues 1–25 (MEGINKTAKMQFFFRPFSPDPEVQM) lie on the Extracellular side of the membrane. An N-linked (GlcNAc...) asparagine glycan is attached at N5. A helical transmembrane segment spans residues 26–46 (LIFVVFLMMYLTSLGGNATIA). Residues 47-54 (VIVQINHS) lie on the Cytoplasmic side of the membrane. A helical transmembrane segment spans residues 55–75 (LHTPMYFFLANLAVLEIFYTS). At 76-100 (SITPLALANLLSMGKTPVSITGCGT) the chain is on the extracellular side. An intrachain disulfide couples C98 to C190. A helical transmembrane segment spans residues 101–121 (QMFFFVFLGGADCVLLVVMAY). The Cytoplasmic segment spans residues 122 to 140 (DQFIAICHPLRYRLIMSWS). A helical membrane pass occupies residues 141 to 161 (LCVELLVGSLVLGFLLSLPLT). At 162-198 (ILIFHLPFCHNDEIYHFYCDMPAVMRLACADTRVHKT) the chain is on the extracellular side. The chain crosses the membrane as a helical span at residues 199 to 218 (ALYIISFIVLSIPLSLISIS). Residues 219–238 (YVFIVVAILRIRSAEGRQQA) lie on the Cytoplasmic side of the membrane. A helical membrane pass occupies residues 239 to 259 (YSTCSSHILVVLLQYGCTSFI). The Extracellular portion of the chain corresponds to 260-272 (YLSPSSSYSPEMG). Residues 273-293 (RVVSVAYTFITPILNPLIYSL) traverse the membrane as a helical segment. Over 294-309 (RNKELKDALRKALRKF) the chain is Cytoplasmic.

The protein belongs to the G-protein coupled receptor 1 family.

It is found in the cell membrane. Odorant receptor. The chain is Olfactory receptor 10V1 (OR10V1) from Homo sapiens (Human).